Reading from the N-terminus, the 95-residue chain is Aspartyl/glutamyl-tRNA(Asn/Gln) amidotransferase subunit C (95 aa).

This sequence belongs to the GatC family. In terms of assembly, heterotrimer of A, B and C subunits.

It carries out the reaction L-glutamyl-tRNA(Gln) + L-glutamine + ATP + H2O = L-glutaminyl-tRNA(Gln) + L-glutamate + ADP + phosphate + H(+). The enzyme catalyses L-aspartyl-tRNA(Asn) + L-glutamine + ATP + H2O = L-asparaginyl-tRNA(Asn) + L-glutamate + ADP + phosphate + 2 H(+). Functionally, allows the formation of correctly charged Asn-tRNA(Asn) or Gln-tRNA(Gln) through the transamidation of misacylated Asp-tRNA(Asn) or Glu-tRNA(Gln) in organisms which lack either or both of asparaginyl-tRNA or glutaminyl-tRNA synthetases. The reaction takes place in the presence of glutamine and ATP through an activated phospho-Asp-tRNA(Asn) or phospho-Glu-tRNA(Gln). This Roseobacter denitrificans (strain ATCC 33942 / OCh 114) (Erythrobacter sp. (strain OCh 114)) protein is Aspartyl/glutamyl-tRNA(Asn/Gln) amidotransferase subunit C.